Reading from the N-terminus, the 484-residue chain is MEKFHAQYEMLETIGQGGCAQVKLARHRLTGTHVAVKVIVKRECWFNPVMSEAELLMMTDHPNIISLLQVIETKKKVYLIMELCEGKSLYQHIQNAGYLQEDEARPLFKQLLSAMNYCHNQGIVHRDLTPDNIMVEKDGKVKIIDFGLGTQEKPGQNHNLFCEIYPFSTPEVLFNRPYDMRKIDVWGLGVVLYFMVTGKILFDTASVEKLRKQIVAEKCSVPCRLSVELQDLIRLLMTDIPELRPTVAEVMVHPWVTEGSGVLPDPCEEHIPLKPDPAIAKAMGFIGFQAQDIEDSLCQRKFNETMASYCLLKKQILKECDRPIRAQPMNPSVTPLSSLVDAPTFHLGLRRTETEPTGLRLSDNKEVPVCGNSTSKKRERSFSGPGVLSRPINTTPTMDQTHTRTWSGPCIYSNVCTIHPNSINESTEGHISTSAEDKPVHSRGWPRGIKGWTRKIGNAMRKLCCCIPSKETSHLGQRRVCPKI.

A Protein kinase domain is found at 8–256 (YEMLETIGQG…VAEVMVHPWV (249 aa)). ATP contacts are provided by residues 14-22 (IGQGGCAQV) and lysine 37. The Proton acceptor role is filled by aspartate 127. Disordered stretches follow at residues 355–400 (EPTG…TMDQ) and 426–446 (STEGHISTSAEDKPVHSRGWP). The segment covering 391–400 (PINTTPTMDQ) has biased composition (polar residues).

It belongs to the protein kinase superfamily. Tyr protein kinase family. Smok subfamily. As to expression, testis-specific. Expressed in the testis from 22 days postpartum (22 dpp). Expressed late in spermiogenesis, only in Tcr-containing t-haplotypes.

It catalyses the reaction L-seryl-[protein] + ATP = O-phospho-L-seryl-[protein] + ADP + H(+). The enzyme catalyses L-threonyl-[protein] + ATP = O-phospho-L-threonyl-[protein] + ADP + H(+). Its function is as follows. While the main function of Smoks is to control sperm motility, the role of Smok-Tcr, with reduced kinase activity, is to counterbalance a signaling impairment caused by the distorter/sterility loci, giving t-sperm an advantage in reaching the oocytes. Transmission ratio distortion also called segregation distortion is the name given to the phenomenon above-mentioned. Being associated with the T-complex, it allows males heterozygous for a complete t-haplotype to preferentially transmit the t-haplotype chromosome. This Mus musculus (Mouse) protein is Sperm motility kinase Tcr mutant form (Smoktcr).